A 115-amino-acid chain; its full sequence is Parathyroid hormone (115 aa).

The first 25 residues, 1–25 (MIPAKDMAKVMIVMLAICFLTKSDG), serve as a signal peptide directing secretion. Residues 26 to 31 (KSVKKR) constitute a propeptide that is removed on maturation. The segment at 51–69 (RVEWLRKKLQDVHNFVALG) is important for receptor binding. The disordered stretch occupies residues 73-115 (APRDAGSQRPRKKEDNVLVESHEKSLGEADKADVNVLTKAKSQ). The span at 84-105 (KKEDNVLVESHEKSLGEADKAD) shows a compositional bias: basic and acidic residues.

The protein belongs to the parathyroid hormone family. As to quaternary structure, interacts with PTH1R (via N-terminal extracellular domain).

It localises to the secreted. Parathyroid hormone elevates calcium level by dissolving the salts in bone and preventing their renal excretion. Acts by binding to its receptor, PTH1R, activating G protein-coupled receptor signaling. Stimulates [1-14C]-2-deoxy-D-glucose (2DG) transport and glycogen synthesis in osteoblastic cells. The sequence is that of Parathyroid hormone from Homo sapiens (Human).